A 399-amino-acid polypeptide reads, in one-letter code: Glucose-1-phosphate adenylyltransferase (399 aa).

Residues Tyr-100, Gly-165, 180–181 (EK), and Ser-191 contribute to the alpha-D-glucose 1-phosphate site.

The protein belongs to the bacterial/plant glucose-1-phosphate adenylyltransferase family. As to quaternary structure, homotetramer.

The catalysed reaction is alpha-D-glucose 1-phosphate + ATP + H(+) = ADP-alpha-D-glucose + diphosphate. Its pathway is glycan biosynthesis; glycogen biosynthesis. Its function is as follows. Involved in the biosynthesis of ADP-glucose, a building block required for the elongation reactions to produce glycogen. Catalyzes the reaction between ATP and alpha-D-glucose 1-phosphate (G1P) to produce pyrophosphate and ADP-Glc. The chain is Glucose-1-phosphate adenylyltransferase from Desulforamulus reducens (strain ATCC BAA-1160 / DSM 100696 / MI-1) (Desulfotomaculum reducens).